The chain runs to 459 residues: Bifunctional protein GlmU (459 aa).

The tract at residues 1-229 (MSNFAIILAA…FDESLGVNDR (229 aa)) is pyrophosphorylase. Residues 8-11 (LAAG), Lys-22, Gln-72, 77-78 (GT), 101-102 (GD), Gly-139, Glu-154, Asn-169, and Asn-227 contribute to the UDP-N-acetyl-alpha-D-glucosamine site. Asp-102 lines the Ca(2+) pocket. Mg(2+) is bound at residue Asp-102. Asn-227 is a Ca(2+) binding site. Asn-227 provides a ligand contact to Mg(2+). A linker region spans residues 230 to 250 (VALATAESVMRRRINHKHMVN). An N-acetyltransferase region spans residues 251–459 (GVSFVNPEAT…TRLPHHPKNQ (209 aa)). 2 residues coordinate UDP-N-acetyl-alpha-D-glucosamine: Arg-332 and Lys-350. His-362 (proton acceptor) is an active-site residue. UDP-N-acetyl-alpha-D-glucosamine contacts are provided by Tyr-365 and Asn-376. Acetyl-CoA-binding positions include Ala-379, 385–386 (NY), Ser-404, Ala-422, and Arg-439.

This sequence in the N-terminal section; belongs to the N-acetylglucosamine-1-phosphate uridyltransferase family. The protein in the C-terminal section; belongs to the transferase hexapeptide repeat family. Homotrimer. The cofactor is Mg(2+). Ca(2+) is required as a cofactor.

It is found in the cytoplasm. The enzyme catalyses alpha-D-glucosamine 1-phosphate + acetyl-CoA = N-acetyl-alpha-D-glucosamine 1-phosphate + CoA + H(+). It carries out the reaction N-acetyl-alpha-D-glucosamine 1-phosphate + UTP + H(+) = UDP-N-acetyl-alpha-D-glucosamine + diphosphate. The protein operates within nucleotide-sugar biosynthesis; UDP-N-acetyl-alpha-D-glucosamine biosynthesis; N-acetyl-alpha-D-glucosamine 1-phosphate from alpha-D-glucosamine 6-phosphate (route II): step 2/2. It functions in the pathway nucleotide-sugar biosynthesis; UDP-N-acetyl-alpha-D-glucosamine biosynthesis; UDP-N-acetyl-alpha-D-glucosamine from N-acetyl-alpha-D-glucosamine 1-phosphate: step 1/1. It participates in bacterial outer membrane biogenesis; LPS lipid A biosynthesis. In terms of biological role, catalyzes the last two sequential reactions in the de novo biosynthetic pathway for UDP-N-acetylglucosamine (UDP-GlcNAc). The C-terminal domain catalyzes the transfer of acetyl group from acetyl coenzyme A to glucosamine-1-phosphate (GlcN-1-P) to produce N-acetylglucosamine-1-phosphate (GlcNAc-1-P), which is converted into UDP-GlcNAc by the transfer of uridine 5-monophosphate (from uridine 5-triphosphate), a reaction catalyzed by the N-terminal domain. The sequence is that of Bifunctional protein GlmU from Streptococcus pneumoniae serotype 4 (strain ATCC BAA-334 / TIGR4).